We begin with the raw amino-acid sequence, 336 residues long: GTPase Obg (336 aa).

Residues 1–159 (MKFLDQAKIY…RWVWLRLKLI (159 aa)) enclose the Obg domain. One can recognise an OBG-type G domain in the interval 160–328 (ADIGLVGLPN…LLRLLQDRVT (169 aa)). Residues 166 to 173 (GLPNAGKS), 191 to 195 (FTTLH), 213 to 216 (DIPG), 280 to 283 (NKCD), and 309 to 311 (SGA) contribute to the GTP site. Mg(2+)-binding residues include serine 173 and threonine 193.

The protein belongs to the TRAFAC class OBG-HflX-like GTPase superfamily. OBG GTPase family. As to quaternary structure, monomer. Mg(2+) serves as cofactor.

It localises to the cytoplasm. Its function is as follows. An essential GTPase which binds GTP, GDP and possibly (p)ppGpp with moderate affinity, with high nucleotide exchange rates and a fairly low GTP hydrolysis rate. Plays a role in control of the cell cycle, stress response, ribosome biogenesis and in those bacteria that undergo differentiation, in morphogenesis control. This is GTPase Obg from Gluconobacter oxydans (strain 621H) (Gluconobacter suboxydans).